Reading from the N-terminus, the 661-residue chain is MPNSEEVMAKERVVSPSAEFKKNANISLKNYKSLYKESIENPNKFWAREANRLIWFKKWTKVLSHDFKNAKVEWFKGGKLNVSYNCLDRHISTPLKNKAALIWEGDNPTESRVLTYYDVYREVNRFANILKKFGVKKGDRVLVYLPMIPELAITILACTRIGAIHSVVFGGFSPEALQSRIDDCKPKLVVTADGGFRGGKPIELKKNVDLALEKSKEKVKTVIVVRRTGNESGLTWKDGQDYWYHFLMNDPELSAYCKPEEMDAEDPLFILYTSGSTGKPKGVLHTTGGYLLGANLTFHYVFDIKPEDTYWCTADIGWVTGHSYLVYGPLSNGASSVMFEGVPSYPDAGRFWDVIDKYGVNIFYTAPTAIRALMREGLNHIQKRDLSSLRLLGSVGEPINPEAWEWYFKNIGKGKCPIVDTWWQTETGSIMITALPGAIPQKPGSATLPFFGVQPVLVDNDGKEITDKGEVSGNLCIKGPWPSMMRGVYGDPKRFFETYFSQFKGYYFTGDGARRDKDGYFWITGRVDDVINVSGHRIGSAEVESALVENKSVAEAAVVGFPHDIKGQGIYAYVTVKEGVTTNDVLKKELISTVEKMIGKIARPDVIHWAPGLPKTRSGKIMRRILRKIVSGEFEGLGDTSTLADPSVVQKLIEDKKKFHS.

Residues 197-200 (RGGK) and Thr320 each bind CoA. ATP is bound by residues 396 to 398 (GEP), 420 to 425 (DTWWQT), Asp511, and Arg526. Position 534 (Ser534) interacts with CoA. Arg537 lines the ATP pocket. Mg(2+)-binding residues include Val548 and Val553. Lys620 is modified (N6-acetyllysine).

The protein belongs to the ATP-dependent AMP-binding enzyme family. The cofactor is Mg(2+). Post-translationally, acetylated. Deacetylation by the SIR2-homolog deacetylase activates the enzyme.

The catalysed reaction is acetate + ATP + CoA = acetyl-CoA + AMP + diphosphate. Its function is as follows. Catalyzes the conversion of acetate into acetyl-CoA (AcCoA), an essential intermediate at the junction of anabolic and catabolic pathways. AcsA undergoes a two-step reaction. In the first half reaction, AcsA combines acetate with ATP to form acetyl-adenylate (AcAMP) intermediate. In the second half reaction, it can then transfer the acetyl group from AcAMP to the sulfhydryl group of CoA, forming the product AcCoA. The polypeptide is Acetyl-coenzyme A synthetase (Leptospira interrogans serogroup Icterohaemorrhagiae serovar Lai (strain 56601)).